The sequence spans 86 residues: Serine protease inhibitor Kazal-type 2 (86 aa).

Positions Met1 to Ser16 are cleaved as a signal peptide. Positions Gln32–Cys86 constitute a Kazal-like domain. 3 disulfides stabilise this stretch: Cys38/Cys68, Cys46/Cys65, and Cys54/Cys86.

In terms of tissue distribution, expressed in sperm (at protein level). Expressed in testis but not in ovary, brain, heart, kidney or lung. Within testis, expressed in epididymis and germ cells.

It localises to the secreted. Its subcellular location is the cytoplasmic vesicle. The protein resides in the secretory vesicle. The protein localises to the acrosome. Functionally, as a strong inhibitor of acrosin, it is required for normal spermiogenesis. It probably hinders premature activation of proacrosin and other proteases, thus preventing the cascade of events leading to spermiogenesis defects. May be involved in the regulation of serine protease-dependent germ cell apoptosis. It also inhibits trypsin. The sequence is that of Serine protease inhibitor Kazal-type 2 (Spink2) from Mus musculus (Mouse).